The sequence spans 212 residues: MKQLFRQWYDLSEIKKELTTRNWFPATSGNISIKVSHEPLTFLITASGKDKTKTTPDDFLLVDHLGVPVLETELRPSAETILHTHIYNNTNAGCVLHVHTTDNNVITNLYSDAVTLQNQEIIKALDIWEEGATINIPIIENHAHIPTLGENFRKHIQGDSGAVLIRNHGITVWGRDSFDAKKRLEAYEFLFQFHIKLLSIQGGVSNGANSYS.

Residues His-97 and His-99 each coordinate Zn(2+).

It belongs to the aldolase class II family. MtnB subfamily. Homotetramer. Zn(2+) is required as a cofactor.

It catalyses the reaction 5-(methylsulfanyl)-D-ribulose 1-phosphate = 5-methylsulfanyl-2,3-dioxopentyl phosphate + H2O. The protein operates within amino-acid biosynthesis; L-methionine biosynthesis via salvage pathway; L-methionine from S-methyl-5-thio-alpha-D-ribose 1-phosphate: step 2/6. Its function is as follows. Catalyzes the dehydration of methylthioribulose-1-phosphate (MTRu-1-P) into 2,3-diketo-5-methylthiopentyl-1-phosphate (DK-MTP-1-P). This Bacillus cereus (strain ATCC 10987 / NRS 248) protein is Methylthioribulose-1-phosphate dehydratase.